The chain runs to 207 residues: Ras-related protein Rab-8A (207 aa).

GTP-binding residues include Ser-17, Gly-18, Val-19, Gly-20, Lys-21, Thr-22, Cys-23, Ser-35, Ser-39, and Thr-40. Position 22 (Thr-22) interacts with Mg(2+). 2 consecutive short sequence motifs (switch) follow at residues 31–45 (DAFN…GIDF) and 63–80 (DTAG…YYRG). Thr-40 and Asp-63 together coordinate Mg(2+). Gly-66 contacts GTP. At Thr-72 the chain carries Phosphothreonine; by LRRK2. 5 residues coordinate GTP: Asn-121, Lys-122, Asp-124, Ala-152, and Lys-153. Phosphoserine occurs at positions 181 and 185. At Cys-204 the chain carries Cysteine methyl ester. A lipid anchor (S-geranylgeranyl cysteine) is attached at Cys-204. Residues 205-207 (SLL) constitute a propeptide, removed in mature form.

The protein belongs to the small GTPase superfamily. Rab family. As to quaternary structure, interacts (GTP-bound form) with MICALL1; regulates RAB8A association with recycling endosomes. Interacts with MICALL2; competes with RAB13 and is involved in E-cadherin endocytic recycling. Interacts (GTP-bound form) with MICAL1, MICALCL, MICAL3 and EHBP1L1; two molecules of RAB8A can bind to one molecule of the effector protein; ternary complexes of RAB8A, RAB13 and either MICAL1 or EHBP1L1 are possible. Interacts (GTP-bound form) with EHBP1. Interacts with EHD1. Interacts with MAP4K2 and SYTL4. Interacts with SGSM1 and SGSM3. Interacts with RABIF, RIMS2, RPH3A and RPH3A. Interacts with OPTN. Interacts with MYO5B. Interacts with CIMAP3. Interacts with BIRC6/bruce. Interacts with OCRL. Interacts with AHI1. Interacts with DCDC1. Interacts with LRRK2; interaction facilitates phosphorylation of Thr-72. Interacts with RAB31P, GDI1, GDI2, CHM, CHML, RABGGTA, RABGGTB, TBC1D15 and INPP5B; these interactions are dependent on Thr-72 not being phosphorylated. Interacts with RILPL1 and RILPL2; these interactions are dependent on the phosphorylation of Thr-72 by LRRK2. Interacts with DZIP1; prevents inhibition by the GDP-dissociation inhibitor GDI2. Interacts with RAB3IP/Rabin8, RAB3IP functions as guanine exchange factor (GEF) towards RAB8A. Interacts (in GDP-bound form) with RPGR, RPGR functions as GEF towards RAB8A. The cofactor is Mg(2+). Post-translationally, phosphorylation of Thr-72 in the switch II region by LRRK2 prevents the association of RAB regulatory proteins, including CHM, CHML and RAB GDP dissociation inhibitors GDI1 and GDI2. Phosphorylation by LRRK2 is required for localization to stressed lysosomes.

It is found in the cell membrane. The protein localises to the golgi apparatus. The protein resides in the endosome membrane. Its subcellular location is the recycling endosome membrane. It localises to the cell projection. It is found in the cilium. The protein localises to the cytoplasmic vesicle. The protein resides in the phagosome membrane. Its subcellular location is the cytoplasm. It localises to the cytoskeleton. It is found in the microtubule organizing center. The protein localises to the centrosome. The protein resides in the centriole. Its subcellular location is the cilium basal body. It localises to the midbody. It is found in the lysosome. The catalysed reaction is GTP + H2O = GDP + phosphate + H(+). Its activity is regulated as follows. Regulated by guanine nucleotide exchange factors (GEFs) such as RAB3IP/Rabin8 and RPGR which promote the exchange of bound GDP for free GTP, GTPase activating proteins (GAPs) which increase the GTP hydrolysis activity, and GDP dissociation inhibitors (GDIs) which inhibit the dissociation of the nucleotide from the GTPase. Activated in response to insulin. Functionally, the small GTPases Rab are key regulators of intracellular membrane trafficking, from the formation of transport vesicles to their fusion with membranes. Rabs cycle between an inactive GDP-bound form and an active GTP-bound form that is able to recruit to membranes different sets of downstream effectors directly responsible for vesicle formation, movement, tethering and fusion. RAB8A is involved in polarized vesicular trafficking and neurotransmitter release. Together with RAB11A, RAB3IP, the exocyst complex, PARD3, PRKCI, ANXA2, CDC42 and DNMBP promotes transcytosis of PODXL to the apical membrane initiation sites (AMIS), apical surface formation and lumenogenesis. Regulates the compacted morphology of the Golgi. Together with MYO5B and RAB11A participates in epithelial cell polarization. Also involved in membrane trafficking to the cilium and ciliogenesis. Together with MICALL2, may also regulate adherens junction assembly. May play a role in insulin-induced transport to the plasma membrane of the glucose transporter GLUT4 and therefore play a role in glucose homeostasis. Involved in autophagy. Participates in the export of a subset of neosynthesized proteins through a Rab8-Rab10-Rab11-dependent endososomal export route. Targeted to and stabilized on stressed lysosomes through LRRK2 phosphorylation. Suppresses stress-induced lysosomal enlargement through EHBP1 and EHNP1L1 effector proteins. The sequence is that of Ras-related protein Rab-8A from Mus musculus (Mouse).